Reading from the N-terminus, the 154-residue chain is Myoglobin (154 aa).

A Globin domain is found at 2–148; it reads GLSDGEWQLV…FRHDMAAKYK (147 aa). Ser4 is modified (phosphoserine). His65 provides a ligand contact to nitrite. His65 is a binding site for O2. Thr68 bears the Phosphothreonine mark. His94 serves as a coordination point for heme b.

Belongs to the globin family. In terms of assembly, monomeric.

The protein resides in the cytoplasm. The protein localises to the sarcoplasm. It carries out the reaction Fe(III)-heme b-[protein] + nitric oxide + H2O = Fe(II)-heme b-[protein] + nitrite + 2 H(+). The enzyme catalyses H2O2 + AH2 = A + 2 H2O. Its function is as follows. Monomeric heme protein which primary function is to store oxygen and facilitate its diffusion within muscle tissues. Reversibly binds oxygen through a pentacoordinated heme iron and enables its timely and efficient release as needed during periods of heightened demand. Depending on the oxidative conditions of tissues and cells, and in addition to its ability to bind oxygen, it also has a nitrite reductase activity whereby it regulates the production of bioactive nitric oxide. Under stress conditions, like hypoxia and anoxia, it also protects cells against reactive oxygen species thanks to its pseudoperoxidase activity. This Osphranter rufus (Red kangaroo) protein is Myoglobin (MB).